A 213-amino-acid polypeptide reads, in one-letter code: MTDSTPFAPTAQRLGLYPVVDSVEWIERLLGVGVKTIQLRIKDRSDEQAETDVIQAIALGSRYQAQLFINDYWTLAVKHQAYGVHLGQEDLDTADLAAIKKAGLRLGVSTHYDRELARAVAINPSYIALGHIFPTQTKDMPSAPQGLAELTRHIADLQGRFPTVAIGGISIDRVPAVLATGVGSIAVVSAITQAPDWRQATATLLKMIEGREA.

4-amino-2-methyl-5-(diphosphooxymethyl)pyrimidine-binding positions include 38–42 (QLRIK) and Asn70. Residues Asp71 and Asp90 each coordinate Mg(2+). Ser109 serves as a coordination point for 4-amino-2-methyl-5-(diphosphooxymethyl)pyrimidine. 135-137 (TQT) serves as a coordination point for 2-[(2R,5Z)-2-carboxy-4-methylthiazol-5(2H)-ylidene]ethyl phosphate. Lys138 contributes to the 4-amino-2-methyl-5-(diphosphooxymethyl)pyrimidine binding site. 2-[(2R,5Z)-2-carboxy-4-methylthiazol-5(2H)-ylidene]ethyl phosphate contacts are provided by residues Gly168 and 188–189 (VS).

This sequence belongs to the thiamine-phosphate synthase family. Requires Mg(2+) as cofactor.

It carries out the reaction 2-[(2R,5Z)-2-carboxy-4-methylthiazol-5(2H)-ylidene]ethyl phosphate + 4-amino-2-methyl-5-(diphosphooxymethyl)pyrimidine + 2 H(+) = thiamine phosphate + CO2 + diphosphate. The enzyme catalyses 2-(2-carboxy-4-methylthiazol-5-yl)ethyl phosphate + 4-amino-2-methyl-5-(diphosphooxymethyl)pyrimidine + 2 H(+) = thiamine phosphate + CO2 + diphosphate. It catalyses the reaction 4-methyl-5-(2-phosphooxyethyl)-thiazole + 4-amino-2-methyl-5-(diphosphooxymethyl)pyrimidine + H(+) = thiamine phosphate + diphosphate. It participates in cofactor biosynthesis; thiamine diphosphate biosynthesis; thiamine phosphate from 4-amino-2-methyl-5-diphosphomethylpyrimidine and 4-methyl-5-(2-phosphoethyl)-thiazole: step 1/1. In terms of biological role, condenses 4-methyl-5-(beta-hydroxyethyl)thiazole monophosphate (THZ-P) and 2-methyl-4-amino-5-hydroxymethyl pyrimidine pyrophosphate (HMP-PP) to form thiamine monophosphate (TMP). This is Thiamine-phosphate synthase from Pectobacterium atrosepticum (strain SCRI 1043 / ATCC BAA-672) (Erwinia carotovora subsp. atroseptica).